The following is a 261-amino-acid chain: 5'-nucleotidase SurE (261 aa).

D8, D9, S40, and N94 together coordinate a divalent metal cation.

Belongs to the SurE nucleotidase family. It depends on a divalent metal cation as a cofactor.

It localises to the cytoplasm. The enzyme catalyses a ribonucleoside 5'-phosphate + H2O = a ribonucleoside + phosphate. Functionally, nucleotidase that shows phosphatase activity on nucleoside 5'-monophosphates. In Anaplasma marginale (strain St. Maries), this protein is 5'-nucleotidase SurE.